The following is a 306-amino-acid chain: MIKSWTKKWFLILFLMASCSSYLVATTGEKYFKMATQAFKRGDYHKAVAFYKRSCNLRVGVGCTSLGSMYEDGDGVDQNITKAVFYYRRGCNLRNHLACASLGSMYEDGDGVQKNLPKAIYYYRRGCHLKGGVSCGSLGFMYFNGTGVKQNYAKALFLSKYACSLNYGISCNFVGYMYRNAKGVQKDLKKALANFKRGCHLKDGASCVSLGYMYEVGMDVKQNGEQALNLYKKGCYLKRGSGCHNVAVMYYTGKGVPKDLDKAISYYKKGCTLGFSGSCKVLEEVIGKKSDDLQDDAQNDTQDDMQ.

Positions 1-25 (MIKSWTKKWFLILFLMASCSSYLVA) are cleaved as a signal peptide. TPR repeat units follow at residues 28-61 (GEKYFKMATQAFKRGDYHKAVAFYKRSCNLRVGV), 96-133 (HLACASLGSMYEDGDGVQKNLPKAIYYYRRGCHLKGGV), 168-205 (GISCNFVGYMYRNAKGVQKDLKKALANFKRGCHLKDGA), and 240-277 (GSGCHNVAVMYYTGKGVPKDLDKAISYYKKGCTLGFSG). 7 disulfide bridges follow: Cys55–Cys63, Cys91–Cys99, Cys127–Cys135, Cys163–Cys171, Cys199–Cys207, Cys235–Cys243, and Cys271–Cys279.

This sequence belongs to the hcp beta-lactamase family.

The protein resides in the secreted. The enzyme catalyses a beta-lactam + H2O = a substituted beta-amino acid. Its function is as follows. May hydrolyze 6-aminopenicillinic acid and 7-aminocephalosporanic acid (ACA) derivatives. Binds to penicillin. This chain is Putative beta-lactamase HcpD (hcpD), found in Helicobacter pylori (strain ATCC 700392 / 26695) (Campylobacter pylori).